A 372-amino-acid chain; its full sequence is MAPTVLHLRSETKHLEHRSALTPTTTAELIKAGYIVNVERSPERIFDDEEFEKAGATLVPEHSWVDAPKEHIIVGLKELEEKDFPLKHVHVQFAHCYKQQAGWENVLARFPRGGGTLLDLEFLVDEHGRRVAAFGFHAGFAGAALALEVWAWQLNHSEPFPGVESYPNEDALIADVKKAVKEGVEAAGRLPRVIVIGARGRCGSGAVSALKKAGIPDENILDWDMAETAKGGPFKEITDSDIFVNCIYLTSKIPNFVNMESLQVPDRQLRVVCDVSADTTSPFTPVPIYTVATTFDKPTVPVDGLTSGPPLSVISIDHLPSLLPREASEAFSHDLLPSLLTLNDWQNSPVWARAKQLFDEKVATLPESALQK.

Positions 18 and 77 each coordinate L-saccharopine. Catalysis depends on Lys-77, which acts as the Proton acceptor. Residue His-95 is the Proton donor of the active site. Gln-100 serves as a coordination point for L-saccharopine. Residue Arg-129 participates in NAD(+) binding. L-saccharopine is bound by residues Arg-130 and Phe-134. NAD(+) is bound by residues 200 to 201 (GR), Asp-224, Thr-228, Tyr-248, and Val-275. Residues Cys-202 and Cys-246 are joined by a disulfide bond. 276 to 278 (SAD) contacts L-saccharopine. 316–319 (IDHL) contacts NAD(+).

The protein belongs to the AlaDH/PNT family. As to quaternary structure, monomer.

The catalysed reaction is L-saccharopine + NAD(+) + H2O = L-lysine + 2-oxoglutarate + NADH + H(+). Its pathway is amino-acid biosynthesis; L-lysine biosynthesis via AAA pathway; L-lysine from L-alpha-aminoadipate (fungal route): step 3/3. Its function is as follows. Catalyzes the NAD(+)-dependent cleavage of saccharopine to L-lysine and 2-oxoglutarate, the final step in the alpha-aminoadipate (AAA) pathway for lysin biosynthesis. In Neurospora crassa (strain ATCC 24698 / 74-OR23-1A / CBS 708.71 / DSM 1257 / FGSC 987), this protein is Saccharopine dehydrogenase [NAD(+), L-lysine-forming] (lys-4).